A 289-amino-acid chain; its full sequence is Diaminopimelate epimerase (289 aa).

3 residues coordinate substrate: Asn13, Gln47, and Asn67. Catalysis depends on Cys76, which acts as the Proton donor. Substrate is bound by residues 77-78, Asn167, Asn200, and 218-219; these read GN and ER. The active-site Proton acceptor is Cys227. 228–229 contacts substrate; sequence GT.

It belongs to the diaminopimelate epimerase family. In terms of assembly, homodimer.

It is found in the cytoplasm. It carries out the reaction (2S,6S)-2,6-diaminopimelate = meso-2,6-diaminopimelate. It participates in amino-acid biosynthesis; L-lysine biosynthesis via DAP pathway; DL-2,6-diaminopimelate from LL-2,6-diaminopimelate: step 1/1. Catalyzes the stereoinversion of LL-2,6-diaminopimelate (L,L-DAP) to meso-diaminopimelate (meso-DAP), a precursor of L-lysine and an essential component of the bacterial peptidoglycan. This is Diaminopimelate epimerase from Burkholderia mallei (strain NCTC 10247).